The following is a 199-amino-acid chain: Holliday junction branch migration complex subunit RuvA (199 aa).

The segment at 1 to 63 is domain I; sequence MIGCLIGEVF…EDAQQLYGFS (63 aa). The interval 64–142 is domain II; that stretch reads DAQEKTIFRT…TLAQGTSSAA (79 aa). The segment at 143 to 150 is flexible linker; the sequence is ALPQIQFV. The segment at 150-199 is domain III; the sequence is VSNSPVAEAEAALQSLGYKPLEAQKAVAAVKADYTESADIIRAALKSMMK.

Belongs to the RuvA family. As to quaternary structure, homotetramer. Forms an RuvA(8)-RuvB(12)-Holliday junction (HJ) complex. HJ DNA is sandwiched between 2 RuvA tetramers; dsDNA enters through RuvA and exits via RuvB. An RuvB hexamer assembles on each DNA strand where it exits the tetramer. Each RuvB hexamer is contacted by two RuvA subunits (via domain III) on 2 adjacent RuvB subunits; this complex drives branch migration. In the full resolvosome a probable DNA-RuvA(4)-RuvB(12)-RuvC(2) complex forms which resolves the HJ.

Its subcellular location is the cytoplasm. Its function is as follows. The RuvA-RuvB-RuvC complex processes Holliday junction (HJ) DNA during genetic recombination and DNA repair, while the RuvA-RuvB complex plays an important role in the rescue of blocked DNA replication forks via replication fork reversal (RFR). RuvA specifically binds to HJ cruciform DNA, conferring on it an open structure. The RuvB hexamer acts as an ATP-dependent pump, pulling dsDNA into and through the RuvAB complex. HJ branch migration allows RuvC to scan DNA until it finds its consensus sequence, where it cleaves and resolves the cruciform DNA. The protein is Holliday junction branch migration complex subunit RuvA of Acinetobacter baumannii (strain SDF).